A 242-amino-acid chain; its full sequence is Ubiquinone biosynthesis O-methyltransferase (242 aa).

The S-adenosyl-L-methionine site is built by Arg44, Gly64, Asp85, and Met129.

This sequence belongs to the methyltransferase superfamily. UbiG/COQ3 family.

The catalysed reaction is a 3-demethylubiquinol + S-adenosyl-L-methionine = a ubiquinol + S-adenosyl-L-homocysteine + H(+). It catalyses the reaction a 3-(all-trans-polyprenyl)benzene-1,2-diol + S-adenosyl-L-methionine = a 2-methoxy-6-(all-trans-polyprenyl)phenol + S-adenosyl-L-homocysteine + H(+). It functions in the pathway cofactor biosynthesis; ubiquinone biosynthesis. Functionally, O-methyltransferase that catalyzes the 2 O-methylation steps in the ubiquinone biosynthetic pathway. This is Ubiquinone biosynthesis O-methyltransferase from Citrobacter koseri (strain ATCC BAA-895 / CDC 4225-83 / SGSC4696).